A 115-amino-acid polypeptide reads, in one-letter code: Large ribosomal subunit protein bL20 (115 aa).

It belongs to the bacterial ribosomal protein bL20 family.

Functionally, binds directly to 23S ribosomal RNA and is necessary for the in vitro assembly process of the 50S ribosomal subunit. It is not involved in the protein synthesizing functions of that subunit. The protein is Large ribosomal subunit protein bL20 of Prochlorococcus marinus (strain MIT 9303).